A 189-amino-acid chain; its full sequence is Probable nicotinate-nucleotide adenylyltransferase (189 aa).

It belongs to the NadD family.

The catalysed reaction is nicotinate beta-D-ribonucleotide + ATP + H(+) = deamido-NAD(+) + diphosphate. It functions in the pathway cofactor biosynthesis; NAD(+) biosynthesis; deamido-NAD(+) from nicotinate D-ribonucleotide: step 1/1. Catalyzes the reversible adenylation of nicotinate mononucleotide (NaMN) to nicotinic acid adenine dinucleotide (NaAD). The sequence is that of Probable nicotinate-nucleotide adenylyltransferase from Bacillus cereus (strain B4264).